Consider the following 732-residue polypeptide: Elongation factor 2 (732 aa).

The tr-type G domain maps to Glu19–Leu260. GTP contacts are provided by residues Ala28–Thr35, Asp94–His98, and Asn148–Asp151. A Diphthamide modification is found at His597.

Belongs to the TRAFAC class translation factor GTPase superfamily. Classic translation factor GTPase family. EF-G/EF-2 subfamily.

The protein localises to the cytoplasm. Functionally, catalyzes the GTP-dependent ribosomal translocation step during translation elongation. During this step, the ribosome changes from the pre-translocational (PRE) to the post-translocational (POST) state as the newly formed A-site-bound peptidyl-tRNA and P-site-bound deacylated tRNA move to the P and E sites, respectively. Catalyzes the coordinated movement of the two tRNA molecules, the mRNA and conformational changes in the ribosome. The protein is Elongation factor 2 of Thermococcus onnurineus (strain NA1).